The chain runs to 367 residues: MALSSESSAASAARRPSGGPATSWRQVLARLTGGDDLARGQAAWAMDQIMTGEASPAQIAAFAVAMQVKVPTSAEVIELAEVMLNHALPFPAGAIRDDTVDIVGTGGDGVNTLNLSTMAAIVAAAAGVPVVKHGNRAASSLSGGADTLEELGVRIDLGPEQVARSVAEVGIGFCFAPLFHPSYRHTSAVRREIGVPTVFNLLGPLTNPARPRAGLIGCAFAELAEVMAGVFAARRSSVLVVHGDDGLDELTTTTTSTIWRVQAGTVDRLTFDPAGFGFPRAELDDLLGGDAQTNAAEVRAVLAGGQGPVRDAVVLNAAGAIVAHAGLSSRAEWLPAWEDGLARASAAIDSGAAEQLLARWVRFGQQL.

Residues 1–21 (MALSSESSAASAARRPSGGPA) are compositionally biased toward low complexity. Residues 1–24 (MALSSESSAASAARRPSGGPATSW) are disordered. Residues G104, 107–108 (GD), T112, 114–117 (NLST), 132–140 (KHGNRAASS), and G144 each bind 5-phospho-alpha-D-ribose 1-diphosphate. Position 104 (G104) interacts with anthranilate. S116 lines the Mg(2+) pocket. N135 contributes to the anthranilate binding site. Residue R190 participates in anthranilate binding. Mg(2+) contacts are provided by D248 and E249.

Belongs to the anthranilate phosphoribosyltransferase family. Homodimer. Requires Mg(2+) as cofactor.

The catalysed reaction is N-(5-phospho-beta-D-ribosyl)anthranilate + diphosphate = 5-phospho-alpha-D-ribose 1-diphosphate + anthranilate. It functions in the pathway amino-acid biosynthesis; L-tryptophan biosynthesis; L-tryptophan from chorismate: step 2/5. Functionally, catalyzes the transfer of the phosphoribosyl group of 5-phosphorylribose-1-pyrophosphate (PRPP) to anthranilate to yield N-(5'-phosphoribosyl)-anthranilate (PRA). The polypeptide is Anthranilate phosphoribosyltransferase (Mycolicibacterium paratuberculosis (strain ATCC BAA-968 / K-10) (Mycobacterium paratuberculosis)).